The sequence spans 398 residues: uncharacterized protein (398 aa).

Residues 88–108 (IGFTIGFAIFFILLFLLSNMV) traverse the membrane as a helical segment.

It to B.megaterium SpoIV.

The protein resides in the cell membrane. This is an uncharacterized protein from Bacillus subtilis (strain 168).